A 517-amino-acid chain; its full sequence is MIESLIALIAAIVGLGIGYLVAKKINDAKYEIFVEQAKAKAKAIEYEAELILKDAKNSILNAELEVKKKYEEKTHKIQKDFNQKLDDLFKKEQKLQQEEEKLKEDKEYLCKSQKHIQDLQSDVDKLKNKYQEKLDDVLKILEHSTRLTQNEAKEIILKKVEENSREQIAHIVRKYEEEAKNEAKRKANFIIAQATSRFAGEFAAERLINVINIKNDELKGRIIGKEGRNVKTLEMVLGVDIIIDDTPGAIIVSCFNLYRRAIATKVIELLVEDGRIQPARIEEIHEKVCKEFDSAILEEGEIIVMDLGLNKIHPEIVKLIGKLKYRASYGQNALAHSLEVAHLAGIIAAECGGDENLARRAGILHDIGKALTHDFEGSHVDLGAELCNRYKEHPVVINAIYAHHGHEEATSIESAAVCAADTLSAARPGARREVLEAFLKRVSELEDIAKSKEGIKNAYAINAGREIRIIANAQLVNDDESVLLAKEIAAEIQEKMQYPGEIKVNVIRELRAIEYAK.

The chain crosses the membrane as a helical span at residues M1 to V21. The KH domain occupies L207–D273. Residues A333–A426 form the HD domain.

The protein belongs to the RNase Y family.

The protein localises to the cell membrane. In terms of biological role, endoribonuclease that initiates mRNA decay. This Campylobacter jejuni subsp. doylei (strain ATCC BAA-1458 / RM4099 / 269.97) protein is Ribonuclease Y.